We begin with the raw amino-acid sequence, 539 residues long: Carotene epsilon-monooxygenase, chloroplastic (539 aa).

A chloroplast-targeting transit peptide spans 1–36; it reads MESSLFSPSSSSYSSLFTAKPTRLLSPKPKFTFSIR. Cys-487 contributes to the heme binding site.

Belongs to the cytochrome P450 family. Requires heme as cofactor.

Its subcellular location is the plastid. The protein localises to the chloroplast. The enzyme catalyses alpha-carotene + reduced [NADPH--hemoprotein reductase] + O2 = alpha-cryptoxanthin + oxidized [NADPH--hemoprotein reductase] + H2O + H(+). It carries out the reaction zeinoxanthin + reduced [NADPH--hemoprotein reductase] + O2 = lutein + oxidized [NADPH--hemoprotein reductase] + H2O + H(+). Functionally, heme-containing cytochrome P450 involved in the biosynthesis of xanthophylls. Specific for epsilon- and beta-ring hydroxylation of alpha-carotene. Has only a low activity toward the beta-rings of beta-carotene. The preferred substrate in planta is not alpha-carotene but the epsilon-ring of zeinoxanthin. Possesses a major beta-carotene hydroxylase activity in planta when depleted in its preferred substrate alpha-carotene. The polypeptide is Carotene epsilon-monooxygenase, chloroplastic (CYP97C1) (Arabidopsis thaliana (Mouse-ear cress)).